The following is a 319-amino-acid chain: Acetyl-coenzyme A carboxylase carboxyl transferase subunit alpha (319 aa).

The CoA carboxyltransferase C-terminal domain occupies asparagine 32–threonine 293.

Belongs to the AccA family. As to quaternary structure, acetyl-CoA carboxylase is a heterohexamer composed of biotin carboxyl carrier protein (AccB), biotin carboxylase (AccC) and two subunits each of ACCase subunit alpha (AccA) and ACCase subunit beta (AccD).

Its subcellular location is the cytoplasm. It catalyses the reaction N(6)-carboxybiotinyl-L-lysyl-[protein] + acetyl-CoA = N(6)-biotinyl-L-lysyl-[protein] + malonyl-CoA. The protein operates within lipid metabolism; malonyl-CoA biosynthesis; malonyl-CoA from acetyl-CoA: step 1/1. In terms of biological role, component of the acetyl coenzyme A carboxylase (ACC) complex. First, biotin carboxylase catalyzes the carboxylation of biotin on its carrier protein (BCCP) and then the CO(2) group is transferred by the carboxyltransferase to acetyl-CoA to form malonyl-CoA. The protein is Acetyl-coenzyme A carboxylase carboxyl transferase subunit alpha of Thioalkalivibrio sulfidiphilus (strain HL-EbGR7).